Reading from the N-terminus, the 61-residue chain is Small ribosomal subunit protein uS14B (61 aa).

Zn(2+)-binding residues include Cys24, Cys27, Cys40, and Cys43.

It belongs to the universal ribosomal protein uS14 family. Zinc-binding uS14 subfamily. In terms of assembly, part of the 30S ribosomal subunit. Contacts proteins S3 and S10. It depends on Zn(2+) as a cofactor.

Its function is as follows. Binds 16S rRNA, required for the assembly of 30S particles and may also be responsible for determining the conformation of the 16S rRNA at the A site. This is Small ribosomal subunit protein uS14B from Staphylococcus saprophyticus subsp. saprophyticus (strain ATCC 15305 / DSM 20229 / NCIMB 8711 / NCTC 7292 / S-41).